Here is a 306-residue protein sequence, read N- to C-terminus: Ubiquitin carboxyl-terminal hydrolase RPN11 (306 aa).

Met1 is subject to N-acetylmethionine. Residues 1-20 (MERLQRLMMNSKVGSADTGR) form a disordered region. In terms of domain architecture, MPN spans 27 to 162 (VYISSIALLK…IDAFRLIDTG (136 aa)). Residues His109, His111, and Asp122 each coordinate Zn(2+). Residues 109-122 (HSHPGFGCWLSSVD) carry the JAMM motif motif.

Belongs to the peptidase M67A family. Component of the lid subcomplex of the 19S proteasome regulatory particle complex (also named PA700 complex). The 26S proteasome consists of a 20S proteasome core and two 19S regulatory subunits. Interacts directly with RPN8 and STS1. N-acetylated by NAT3.

It carries out the reaction Thiol-dependent hydrolysis of ester, thioester, amide, peptide and isopeptide bonds formed by the C-terminal Gly of ubiquitin (a 76-residue protein attached to proteins as an intracellular targeting signal).. Component of the lid subcomplex of the 26S proteasome, a multiprotein complex involved in the ATP-dependent degradation of ubiquitinated proteins. RPN11 is the only catalytically active member of the lid and serves as the essential deubiquitinase of the proteasome. The sequence is that of Ubiquitin carboxyl-terminal hydrolase RPN11 (RPN11) from Saccharomyces cerevisiae (strain ATCC 204508 / S288c) (Baker's yeast).